Reading from the N-terminus, the 200-residue chain is 2-phospho-L-lactate guanylyltransferase (200 aa).

The protein belongs to the CofC family. As to quaternary structure, homodimer.

The catalysed reaction is (2S)-2-phospholactate + GTP + H(+) = (2S)-lactyl-2-diphospho-5'-guanosine + diphosphate. It functions in the pathway cofactor biosynthesis; coenzyme F420 biosynthesis. Guanylyltransferase that catalyzes the activation of (2S)-2-phospholactate (2-PL) as (2S)-lactyl-2-diphospho-5'-guanosine, via the condensation of 2-PL with GTP. It is involved in the biosynthesis of coenzyme F420, a hydride carrier cofactor. In Ferroglobus placidus (strain DSM 10642 / AEDII12DO), this protein is 2-phospho-L-lactate guanylyltransferase.